Consider the following 111-residue polypeptide: Mitochondrial import inner membrane translocase subunit Tim10B (111 aa).

A Twin CX3C motif motif is present at residues 24 to 48; it reads CFNACARDYTTSTLTKDEGSCVSQC. Cystine bridges form between C24/C48 and C28/C44. The tract at residues 73-111 is disordered; it reads KQGEQSPTEAIKSAKPEPAVPAPEATPVETTPVIEENKQ. The segment covering 94–105 has biased composition (low complexity); that stretch reads APEATPVETTPV.

This sequence belongs to the small Tim family. Component of the TIM22 complex, whose core is composed of tim-22, associated with peripheral protein tin-9.2/tim-10b and the 70 kDa heterohexamer. In most cases, the 70 kDa complex is composed of TIMM9 and TIMM10.

Its subcellular location is the mitochondrion inner membrane. In terms of biological role, component of the TIM22 complex, a complex that mediates the import and insertion of multi-pass transmembrane proteins into the mitochondrial inner membrane. The TIM22 complex forms a twin-pore translocase that uses the membrane potential as the external driving force. In the TIM22 complex, it may act as a docking point for the soluble 70 kDa complex that guides the target proteins in transit through the aqueous mitochondrial intermembrane space. This chain is Mitochondrial import inner membrane translocase subunit Tim10B (tin-9.2), found in Caenorhabditis elegans.